A 305-amino-acid chain; its full sequence is Protoheme IX farnesyltransferase (305 aa).

9 helical membrane passes run 28 to 48 (IIEL…QGVP), 52 to 72 (LVLL…ALNM), 101 to 121 (LAFG…TVNW), 122 to 142 (LSAW…TMIL), 149 to 169 (NIVW…SSVT), 174 to 194 (WAPV…YWPL), 218 to 238 (VVAR…LLLT), 240 to 260 (LGYT…FWLW), and 283 to 303 (LFHW…VDPF).

This sequence belongs to the UbiA prenyltransferase family. Protoheme IX farnesyltransferase subfamily.

Its subcellular location is the cell membrane. The catalysed reaction is heme b + (2E,6E)-farnesyl diphosphate + H2O = Fe(II)-heme o + diphosphate. The protein operates within porphyrin-containing compound metabolism; heme O biosynthesis; heme O from protoheme: step 1/1. Functionally, converts heme B (protoheme IX) to heme O by substitution of the vinyl group on carbon 2 of heme B porphyrin ring with a hydroxyethyl farnesyl side group. The protein is Protoheme IX farnesyltransferase of Streptomyces avermitilis (strain ATCC 31267 / DSM 46492 / JCM 5070 / NBRC 14893 / NCIMB 12804 / NRRL 8165 / MA-4680).